The chain runs to 1060 residues: Beta-galactosidase (1060 aa).

Residues N110 and D209 each coordinate substrate. D209 contacts Na(+). Mg(2+)-binding residues include E432, H434, and E477. Substrate contacts are provided by residues E477 and 553–556 (EYAH). E477 (proton donor) is an active-site residue. Catalysis depends on E553, which acts as the Nucleophile. N613 provides a ligand contact to Mg(2+). F617 and N620 together coordinate Na(+). Residues N620 and W1035 each contribute to the substrate site.

Belongs to the glycosyl hydrolase 2 family. In terms of assembly, homotetramer. The cofactor is Mg(2+). It depends on Na(+) as a cofactor.

The catalysed reaction is Hydrolysis of terminal non-reducing beta-D-galactose residues in beta-D-galactosides.. The polypeptide is Beta-galactosidase (Yersinia pestis bv. Antiqua (strain Antiqua)).